A 609-amino-acid chain; its full sequence is NADH-ubiquinone oxidoreductase chain 5 (609 aa).

16 helical membrane-spanning segments follow: residues 3–23 (VINLFASSIITTLSMLTLPIV), 46–66 (AFMISMIPTTMFIYSGQEMII), 90–110 (MIFVPVALFVTWSIMEFSMWY), 115–135 (PFINRFFKYLLMFLITMMILV), 140–160 (LFQLFIGWEGVGIMSFLLIGW), 174–194 (AVLYNRIGDVGFIMAMAWFLI), 216–236 (LMGLLLAATGKSAQFGLHPWL), 244–264 (TPVSALLHSSTMVVAGVFLLI), 276–296 (MQTTTLCLGAITTLFTAICAL), 304–323 (IIAFSTSSQLGLMIVTIGIN), 328–350 (AFLHICTHAFFKAMLFMCSGSII), 368–388 (VLPFTTTSLIVGSLALTGMPF), 410–432 (WALLLTLVATSMTAAYSTRIMFF), 460–480 (LLLGSIFAGYLISYNITPTST), 485–505 (MPYYLKLTALTVTLLGFILAL), and 585–605 (GLIKLYFLSFIITLILALMMI).

It belongs to the complex I subunit 5 family.

The protein localises to the mitochondrion inner membrane. It carries out the reaction a ubiquinone + NADH + 5 H(+)(in) = a ubiquinol + NAD(+) + 4 H(+)(out). In terms of biological role, core subunit of the mitochondrial membrane respiratory chain NADH dehydrogenase (Complex I) that is believed to belong to the minimal assembly required for catalysis. Complex I functions in the transfer of electrons from NADH to the respiratory chain. The immediate electron acceptor for the enzyme is believed to be ubiquinone. The polypeptide is NADH-ubiquinone oxidoreductase chain 5 (MT-ND5) (Phoca vitulina (Harbor seal)).